A 299-amino-acid polypeptide reads, in one-letter code: MEKLRSGFISIIGRPNVGKSTLMNQLIGKKVAIMSDKPQTTRNRIVGVLNAPKGQAIFLDTPGIHKPKHKLGEIMVTTARKTLGEVDLILYVVDASEEPGGGEQFISQMLKDIKTPVFLVVNKMDTVSREEGLKKISQYSQMVAWQELIPVSAKEKTNLDRLKDLIFAKLPEGPLYYPAGSFTDQPERQLMAEMIREKVLHATREEIPHSVAVIIEHLQETPKGGMVVHATIFTERDSQKGILIGKGGSLLKEVGQKARQEIEALLGTSIYLELWVKVKKDWRQRPDVLRSFGFDEKME.

One can recognise an Era-type G domain in the interval 5 to 172 (RSGFISIIGR…KDLIFAKLPE (168 aa)). The interval 13–20 (GRPNVGKS) is G1. GTP is bound at residue 13-20 (GRPNVGKS). Positions 39–43 (QTTRN) are G2. A G3 region spans residues 60–63 (DTPG). GTP contacts are provided by residues 60 to 64 (DTPGI) and 122 to 125 (NKMD). The G4 stretch occupies residues 122 to 125 (NKMD). Residues 151-153 (VSA) are G5. Residues 203–280 (TREEIPHSVA…YLELWVKVKK (78 aa)) enclose the KH type-2 domain.

It belongs to the TRAFAC class TrmE-Era-EngA-EngB-Septin-like GTPase superfamily. Era GTPase family. Monomer.

Its subcellular location is the cytoplasm. The protein resides in the cell membrane. An essential GTPase that binds both GDP and GTP, with rapid nucleotide exchange. Plays a role in 16S rRNA processing and 30S ribosomal subunit biogenesis and possibly also in cell cycle regulation and energy metabolism. The sequence is that of GTPase Era from Heliobacterium modesticaldum (strain ATCC 51547 / Ice1).